Consider the following 398-residue polypeptide: 4-hydroxy-3-methylbut-2-enyl diphosphate reductase (398 aa).

Cys-66 contacts [4Fe-4S] cluster. His-96 contacts (2E)-4-hydroxy-3-methylbut-2-enyl diphosphate. His-96 lines the dimethylallyl diphosphate pocket. His-96 provides a ligand contact to isopentenyl diphosphate. Cys-157 serves as a coordination point for [4Fe-4S] cluster. Residue His-185 coordinates (2E)-4-hydroxy-3-methylbut-2-enyl diphosphate. A dimethylallyl diphosphate-binding site is contributed by His-185. Isopentenyl diphosphate is bound at residue His-185. Glu-187 (proton donor) is an active-site residue. A (2E)-4-hydroxy-3-methylbut-2-enyl diphosphate-binding site is contributed by Thr-250. A [4Fe-4S] cluster-binding site is contributed by Cys-288. Positions 317, 318, 319, and 379 each coordinate (2E)-4-hydroxy-3-methylbut-2-enyl diphosphate. Ser-317, Ser-318, Asn-319, and Ser-379 together coordinate dimethylallyl diphosphate. Isopentenyl diphosphate is bound by residues Ser-317, Ser-318, Asn-319, and Ser-379.

This sequence belongs to the IspH family. [4Fe-4S] cluster is required as a cofactor.

It carries out the reaction isopentenyl diphosphate + 2 oxidized [2Fe-2S]-[ferredoxin] + H2O = (2E)-4-hydroxy-3-methylbut-2-enyl diphosphate + 2 reduced [2Fe-2S]-[ferredoxin] + 2 H(+). The enzyme catalyses dimethylallyl diphosphate + 2 oxidized [2Fe-2S]-[ferredoxin] + H2O = (2E)-4-hydroxy-3-methylbut-2-enyl diphosphate + 2 reduced [2Fe-2S]-[ferredoxin] + 2 H(+). It functions in the pathway isoprenoid biosynthesis; dimethylallyl diphosphate biosynthesis; dimethylallyl diphosphate from (2E)-4-hydroxy-3-methylbutenyl diphosphate: step 1/1. It participates in isoprenoid biosynthesis; isopentenyl diphosphate biosynthesis via DXP pathway; isopentenyl diphosphate from 1-deoxy-D-xylulose 5-phosphate: step 6/6. Catalyzes the conversion of 1-hydroxy-2-methyl-2-(E)-butenyl 4-diphosphate (HMBPP) into a mixture of isopentenyl diphosphate (IPP) and dimethylallyl diphosphate (DMAPP). Acts in the terminal step of the DOXP/MEP pathway for isoprenoid precursor biosynthesis. This Synechococcus sp. (strain ATCC 27144 / PCC 6301 / SAUG 1402/1) (Anacystis nidulans) protein is 4-hydroxy-3-methylbut-2-enyl diphosphate reductase.